The primary structure comprises 313 residues: ADP-L-glycero-D-manno-heptose-6-epimerase (313 aa).

NADP(+)-binding positions include 10–11, 31–32, K38, R53, 75–79, and N92; these read MI, DN, and EGACS. The Proton acceptor role is filled by Y139. Position 143 (K143) interacts with NADP(+). Residue N174 coordinates substrate. Residues V175 and K183 each coordinate NADP(+). The Proton acceptor role is filled by K183. Substrate is bound by residues S185, H192, 206–209, R214, and Y277; that span reads FAGS.

This sequence belongs to the NAD(P)-dependent epimerase/dehydratase family. HldD subfamily. As to quaternary structure, homopentamer. NADP(+) serves as cofactor.

It catalyses the reaction ADP-D-glycero-beta-D-manno-heptose = ADP-L-glycero-beta-D-manno-heptose. Its pathway is nucleotide-sugar biosynthesis; ADP-L-glycero-beta-D-manno-heptose biosynthesis; ADP-L-glycero-beta-D-manno-heptose from D-glycero-beta-D-manno-heptose 7-phosphate: step 4/4. Functionally, catalyzes the interconversion between ADP-D-glycero-beta-D-manno-heptose and ADP-L-glycero-beta-D-manno-heptose via an epimerization at carbon 6 of the heptose. This is ADP-L-glycero-D-manno-heptose-6-epimerase from Vibrio campbellii (strain ATCC BAA-1116).